A 266-amino-acid polypeptide reads, in one-letter code: 2-C-methyl-D-erythritol 4-phosphate cytidylyltransferase (266 aa).

Residues 234 to 251 (ADDARSAEARSAEARSEE) show a composition bias toward basic and acidic residues. Residues 234–266 (ADDARSAEARSAEARSEEPQFAGARSTDARSGG) are disordered.

The protein belongs to the IspD/TarI cytidylyltransferase family. IspD subfamily.

It carries out the reaction 2-C-methyl-D-erythritol 4-phosphate + CTP + H(+) = 4-CDP-2-C-methyl-D-erythritol + diphosphate. It functions in the pathway isoprenoid biosynthesis; isopentenyl diphosphate biosynthesis via DXP pathway; isopentenyl diphosphate from 1-deoxy-D-xylulose 5-phosphate: step 2/6. In terms of biological role, catalyzes the formation of 4-diphosphocytidyl-2-C-methyl-D-erythritol from CTP and 2-C-methyl-D-erythritol 4-phosphate (MEP). The polypeptide is 2-C-methyl-D-erythritol 4-phosphate cytidylyltransferase (Frankia casuarinae (strain DSM 45818 / CECT 9043 / HFP020203 / CcI3)).